Reading from the N-terminus, the 475-residue chain is Mitochondrial adenyl nucleotide antiporter SLC25A24 (475 aa).

The regulatory N-terminal domain stretch occupies residues 1-173 (MLRWLRGFVL…RFWKHSTGID (173 aa)). The Mitochondrial intermembrane portion of the chain corresponds to 1 to 197 (MLRWLRGFVL…ERKSGQWWRQ (197 aa)). 4 consecutive EF-hand domains span residues 19–54 (EPPT…LGIP), 55–88 (LGQD…KDHE), 86–121 (DHEK…LGLT), and 122–157 (ISEQ…NPVA). Residues Asp-32, Asn-34, Asp-36, Val-38, Glu-43, Asp-68, Asn-70, Asp-72, Lys-74, Glu-79, Asp-99, Asn-101, Asp-103, Lys-105, Glu-110, Asp-135, Asp-137, Thr-139, Thr-141, and Glu-146 each contribute to the Ca(2+) site. The linker region stretch occupies residues 159–168 (IEEIIRFWKH). The segment at 174-475 (IGDSLTIPDE…MKQTLGVTQK (302 aa)) is C-terminal transmembrane transporter domain. Solcar repeat units lie at residues 192–276 (GQWW…YKKL), 284–369 (IGTF…LKSH), and 381–469 (PGVL…MKQT). Residues 198-215 (LLAGGIAGAVSRTSTAPL) traverse the membrane as a helical segment. The Mitochondrial matrix portion of the chain corresponds to 216–250 (DRLKVMMQVHGSKSMNIFGGFRQMIKEGGVRSLWR). The chain crosses the membrane as a helical span at residues 251–270 (GNGTNVIKIAPETAVKFWVY). Residues 271–293 (EQYKKLLTEEGQKIGTFERFISG) are Mitochondrial intermembrane-facing. The chain crosses the membrane as a helical span at residues 294-307 (SMAGATAQTFIYPM). The Mitochondrial matrix segment spans residues 308–343 (EVMKTRLAVGKTGQYSGIYDCAKKILKYEGFGAFYK). Lys-318 bears the N6-acetyllysine; alternate mark. Lys-318 bears the N6-succinyllysine; alternate mark. Lys-334 carries the N6-acetyllysine modification. Residues 344 to 363 (GYVPNLLGIIPYAGIDLAVY) traverse the membrane as a helical segment. At 364–386 (ELLKSHWLDNFAKDSVNPGVLVL) the chain is on the mitochondrial intermembrane side. A helical transmembrane segment spans residues 387-404 (LGCGALSSTCGQLASYPL). Over 405 to 443 (ALVRTRMQAQAMLEGAPQLNMVGLFRRIISKEGLPGLYR) the chain is Mitochondrial matrix. Lys-435 carries the N6-acetyllysine; alternate modification. Lys-435 is modified (N6-succinyllysine; alternate). Residues 444–463 (GITPNFMKVLPAVGISYVVY) form a helical membrane-spanning segment. The Mitochondrial intermembrane segment spans residues 464–475 (ENMKQTLGVTQK).

Belongs to the mitochondrial carrier (TC 2.A.29) family. As to quaternary structure, monomer. In terms of tissue distribution, mainly expressed in colon. Also expressed in the small intestine proximal to the ileum. Weakly expressed in kidney but not in the liver.

The protein localises to the mitochondrion inner membrane. It localises to the peroxisome membrane. It carries out the reaction Mg(2+)(out) + phosphate(in) + ATP(out) = Mg(2+)(in) + phosphate(out) + ATP(in). It catalyses the reaction ADP(out) + phosphate(in) + H(+)(out) = ADP(in) + phosphate(out) + H(+)(in). The enzyme catalyses AMP(out) + phosphate(in) = AMP(in) + phosphate(out). The catalysed reaction is phosphate(in) + ATP(out) + 2 H(+)(out) = phosphate(out) + ATP(in) + 2 H(+)(in). It carries out the reaction dADP(in) + ADP(out) = dADP(out) + ADP(in). It catalyses the reaction Mg(2+)(in) + ADP(out) + ATP(in) + H(+)(out) = Mg(2+)(out) + ADP(in) + ATP(out) + H(+)(in). The enzyme catalyses ADP(out) + diphosphate(in) = ADP(in) + diphosphate(out). The catalysed reaction is dAMP(in) + ADP(out) + H(+)(out) = dAMP(out) + ADP(in) + H(+)(in). It carries out the reaction 3'-AMP(in) + ADP(out) + H(+)(out) = 3'-AMP(out) + ADP(in) + H(+)(in). It catalyses the reaction dAMP(out) + phosphate(in) = dAMP(in) + phosphate(out). The enzyme catalyses 3'-AMP(out) + phosphate(in) = 3'-AMP(in) + phosphate(out). The catalysed reaction is dADP(out) + phosphate(in) + H(+)(out) = dADP(in) + phosphate(out) + H(+)(in). Its activity is regulated as follows. Activated by an increase in cytosolic calcium levels that induce a conformational change of the N-terminal regulatory domain, uncapping the channel and allowing transport. Inhibited by bathophenanthroline, mersalyl, p-hydroxymercuribenzoate, bromcresol purple and tannic acid. Electroneutral antiporter that mediates the transport of adenyl nucleotides through the inner mitochondrial membrane. Originally identified as an ATP-magnesium/inorganic phosphate antiporter, it also acts as a broad specificity adenyl nucleotide antiporter. By regulating the mitochondrial matrix adenyl nucleotide pool could adapt to changing cellular energetic demands and indirectly regulate adenyl nucleotide-dependent metabolic pathways. In vitro, a low activity is also observed with guanyl and pyrimidine nucleotides. May play a role in protecting cells against oxidative stress-induced cell death, by buffering calcium levels in the mitochondrial matrix through the formation of calcium-phosphate precipitates. The polypeptide is Mitochondrial adenyl nucleotide antiporter SLC25A24 (SLC25A24) (Oryctolagus cuniculus (Rabbit)).